The following is a 261-amino-acid chain: Thiamine thiazole synthase (261 aa).

Residues alanine 33, 52–53, glycine 60, valine 124, and 152–154 contribute to the NAD(+) site; these read ER and HVD. Fe cation-binding residues include aspartate 154 and histidine 169. NAD(+) is bound at residue isoleucine 219. Residue arginine 229 coordinates glycine.

The protein belongs to the THI4 family. In terms of assembly, homooctamer; tetramer of dimers. The cofactor is Fe(2+).

The catalysed reaction is hydrogen sulfide + glycine + NAD(+) = ADP-5-ethyl-4-methylthiazole-2-carboxylate + nicotinamide + 3 H2O + H(+). It participates in cofactor biosynthesis; thiamine diphosphate biosynthesis. Its function is as follows. Involved in the biosynthesis of the thiazole moiety of thiamine. Catalyzes the conversion of NAD and glycine to adenosine diphosphate 5-(2-hydroxyethyl)-4-methylthiazole-2-carboxylate (ADT), an adenylated thiazole intermediate, using free sulfide as a source of sulfur. This chain is Thiamine thiazole synthase, found in Pyrobaculum aerophilum (strain ATCC 51768 / DSM 7523 / JCM 9630 / CIP 104966 / NBRC 100827 / IM2).